A 140-amino-acid polypeptide reads, in one-letter code: Large ribosomal subunit protein uL24 (140 aa).

It belongs to the universal ribosomal protein uL24 family. Part of the 50S ribosomal subunit.

One of two assembly initiator proteins, it binds directly to the 5'-end of the 23S rRNA, where it nucleates assembly of the 50S subunit. In terms of biological role, located at the polypeptide exit tunnel on the outside of the subunit. This Nanoarchaeum equitans (strain Kin4-M) protein is Large ribosomal subunit protein uL24.